Consider the following 269-residue polypeptide: Phosphate import ATP-binding protein PstB 1 (269 aa).

Residues L23–V264 enclose the ABC transporter domain. Residue G55–S62 coordinates ATP.

This sequence belongs to the ABC transporter superfamily. Phosphate importer (TC 3.A.1.7) family. The complex is composed of two ATP-binding proteins (PstB), two transmembrane proteins (PstC and PstA) and a solute-binding protein (PstS).

It localises to the cell membrane. The enzyme catalyses phosphate(out) + ATP + H2O = ADP + 2 phosphate(in) + H(+). Part of the ABC transporter complex PstSACB involved in phosphate import. Responsible for energy coupling to the transport system. The sequence is that of Phosphate import ATP-binding protein PstB 1 from Latilactobacillus sakei subsp. sakei (strain 23K) (Lactobacillus sakei subsp. sakei).